Reading from the N-terminus, the 286-residue chain is Master replication protein (286 aa).

In terms of domain architecture, CRESS-DNA virus Rep endonuclease spans 2–96 (ARQVICWCFT…VEGPWEFGEF (95 aa)). Residues 9–12 (CFTL) carry the RCR-1 motif. Residues E33 and H41 each contribute to the a divalent metal cation site. The RCR-2 motif lies at 41 to 43 (HYQ). Positions 50–70 (KRTSLVQMKKLLPGAHLEKRR) match the Nuclear localization signal motif. The active-site For DNA cleavage activity is Y79. The short motif at 79–82 (YAMK) is the RCR-3 element. A divalent metal cation is bound at residue D84. A Nuclear localization signal motif is present at residues 96-102 (FKEVLED). Residue 180-188 (GPQGGEGKT) coordinates ATP.

The protein belongs to the nanoviridea/circoviridae replication-associated protein family. As to quaternary structure, homooligomer (Potential). Rep binds to repeated DNA motifs (iterons). Requires Mg(2+) as cofactor. Mn(2+) is required as a cofactor.

It is found in the host nucleus. The enzyme catalyses ATP + H2O = ADP + phosphate + H(+). Functionally, essential for the replication of all genomic viral ssDNA (trans-replication). The closed circular ssDNA genome is first converted to a superhelical dsDNA. Rep binds a specific hairpin at the genome origin of replication. Introduces an endonucleolytic nick within the conserved sequence 5'-A[GT]TATTAC-3' in the intergenic region of the genome, thereby initiating the rolling circle replication (RCR). Following cleavage, binds covalently to the 5'-phosphate of DNA as a tyrosyl ester. The cleavage gives rise to a free 3'-OH that serves as a primer for the cellular DNA polymerase. The polymerase synthesizes the (+) strand DNA by rolling circle mechanism. After one round of replication, a Rep-catalyzed nucleotidyl transfer reaction releases a circular single-stranded virus genome, thereby terminating the replication. Displays origin-specific DNA cleavage, nucleotidyl transferase, ATPase and helicase activities. This Subterranean clover stunt virus (strain F) (SCSV) protein is Master replication protein (DNA-R).